A 104-amino-acid chain; its full sequence is L-rhamnose mutarotase (104 aa).

Y18 lines the substrate pocket. H22 acts as the Proton donor in catalysis. Substrate-binding positions include Y41 and 76-77; that span reads WW.

Belongs to the rhamnose mutarotase family. In terms of assembly, homodimer.

The protein resides in the cytoplasm. It carries out the reaction alpha-L-rhamnose = beta-L-rhamnose. It functions in the pathway carbohydrate metabolism; L-rhamnose metabolism. Involved in the anomeric conversion of L-rhamnose. In Listeria monocytogenes serotype 4b (strain F2365), this protein is L-rhamnose mutarotase.